The chain runs to 294 residues: Glycine--tRNA ligase alpha subunit (294 aa).

It belongs to the class-II aminoacyl-tRNA synthetase family. Tetramer of two alpha and two beta subunits.

The protein localises to the cytoplasm. It carries out the reaction tRNA(Gly) + glycine + ATP = glycyl-tRNA(Gly) + AMP + diphosphate. The chain is Glycine--tRNA ligase alpha subunit from Natranaerobius thermophilus (strain ATCC BAA-1301 / DSM 18059 / JW/NM-WN-LF).